The following is a 177-amino-acid chain: Ribosome maturation factor RimM (177 aa).

The region spanning 100–177 (EDEYYWSDLV…TVLVAWPSDY (78 aa)) is the PRC barrel domain.

This sequence belongs to the RimM family. In terms of assembly, binds ribosomal protein uS19.

The protein localises to the cytoplasm. In terms of biological role, an accessory protein needed during the final step in the assembly of 30S ribosomal subunit, possibly for assembly of the head region. Essential for efficient processing of 16S rRNA. May be needed both before and after RbfA during the maturation of 16S rRNA. It has affinity for free ribosomal 30S subunits but not for 70S ribosomes. The chain is Ribosome maturation factor RimM from Psychrobacter cryohalolentis (strain ATCC BAA-1226 / DSM 17306 / VKM B-2378 / K5).